The primary structure comprises 299 residues: Leucine zipper transcription factor-like protein 1 (299 aa).

The tract at residues 145-299 is interaction with BSS9; the sequence is GTTELLNKEI…KRLAKYESED (155 aa). Positions 145-299 form a coiled coil; sequence GTTELLNKEI…KRLAKYESED (155 aa).

This sequence belongs to the LZTFL1 family. In terms of assembly, self-associates. Interacts with BBS9; the interaction mediates the association of LZTL1 with the BBsome complex and regulates BBSome ciliary trafficking.

The protein resides in the cytoplasm. In terms of biological role, regulates ciliary localization of the BBSome complex. Together with the BBSome complex, controls SMO ciliary trafficking and contributes to the sonic hedgehog (SHH) pathway regulation. May play a role in neurite outgrowth. May have tumor suppressor function. This Rattus norvegicus (Rat) protein is Leucine zipper transcription factor-like protein 1 (Lztfl1).